A 311-amino-acid polypeptide reads, in one-letter code: Methionyl-tRNA formyltransferase (311 aa).

110–113 lines the (6S)-5,6,7,8-tetrahydrofolate pocket; sequence SLLP.

The protein belongs to the Fmt family.

The catalysed reaction is L-methionyl-tRNA(fMet) + (6R)-10-formyltetrahydrofolate = N-formyl-L-methionyl-tRNA(fMet) + (6S)-5,6,7,8-tetrahydrofolate + H(+). Functionally, attaches a formyl group to the free amino group of methionyl-tRNA(fMet). The formyl group appears to play a dual role in the initiator identity of N-formylmethionyl-tRNA by promoting its recognition by IF2 and preventing the misappropriation of this tRNA by the elongation apparatus. This is Methionyl-tRNA formyltransferase from Streptococcus pneumoniae (strain JJA).